We begin with the raw amino-acid sequence, 544 residues long: Flagellar hook-associated protein 1 (544 aa).

This sequence belongs to the flagella basal body rod proteins family.

It is found in the secreted. It localises to the bacterial flagellum. The polypeptide is Flagellar hook-associated protein 1 (flgK) (Buchnera aphidicola subsp. Schizaphis graminum (strain Sg)).